Consider the following 621-residue polypeptide: Transmembrane protein 200C (621 aa).

The segment at 12 to 37 is disordered; that stretch reads ARKQDPLRPPSQIPKRKRKAKKRRKN. Over residues 25 to 36 the composition is skewed to basic residues; it reads PKRKRKAKKRRK. Residues 53–73 traverse the membrane as a helical segment; sequence GLIALCGILVLLVGIAMAVVG. Residues 80 to 147 are disordered; the sequence is GTNREGGKQL…RAASPSSSST (68 aa). The segment covering 125 to 147 has biased composition (low complexity); the sequence is SSSAGAPRSTPPARAASPSSSST. The chain crosses the membrane as a helical span at residues 167–187; the sequence is VFGPLIMGIGIFLFICANAVL. 3 disordered regions span residues 284–315, 347–368, and 384–598; these read WPPH…PREP, ASSC…QSTA, and LQGG…FTNK. A compositionally biased stretch (low complexity) spans 290–303; sequence APSGGRPRGAASPP. Residues 405 to 418 show a composition bias toward basic and acidic residues; sequence PGERGSQEIPRGEL. Positions 479 to 490 are enriched in pro residues; it reads RAPPSPEPPPSP. 2 stretches are compositionally biased toward low complexity: residues 491-505 and 523-533; these read GSAD…KAAS and GSSQSDDPSSS. Residues 586–595 show a composition bias toward polar residues; sequence EQPQPVQRQF.

The protein belongs to the TMEM200 family.

Its subcellular location is the membrane. This Homo sapiens (Human) protein is Transmembrane protein 200C (TMEM200C).